Consider the following 726-residue polypeptide: NHL repeat-containing protein 2 (726 aa).

A Thioredoxin domain is found at 43–200 (QKVDGWEQDL…TSIALKYYKD (158 aa)). 6 NHL repeats span residues 212–254 (KLYK…VWKN), 265–307 (NPGR…IDLE), 335–369 (ISSP…IWAL), 409–439 (FAQP…VRTV), 461–505 (AFGD…VDPK), and 518–562 (TNNV…MDLE).

In terms of assembly, monomer. In terms of tissue distribution, ubiquitous. Detected in heart, kidney, muscle, brain, lung, liver and in skin fibroblasts (at protein level).

It localises to the cytoplasm. It is found in the cytosol. In terms of biological role, required for normal embryonic development. The sequence is that of NHL repeat-containing protein 2 (NHLRC2) from Homo sapiens (Human).